The chain runs to 632 residues: Phosphoglucomutase, chloroplastic (632 aa).

A chloroplast-targeting transit peptide spans 1 to 72 (MAMESALTST…PSSPSTSVAQ (72 aa)). Positions 97 and 190 each coordinate alpha-D-glucose 1,6-bisphosphate. S190 (phosphoserine intermediate) is an active-site residue. The Mg(2+) site is built by S190, D355, D357, and D359. S190 is subject to Phosphoserine. Positions 359, 360, 423, 442, 444, and 455 each coordinate alpha-D-glucose 1,6-bisphosphate.

The protein belongs to the phosphohexose mutase family. In terms of assembly, monomer. The cofactor is Mg(2+).

The protein resides in the plastid. It is found in the chloroplast. The catalysed reaction is alpha-D-glucose 1-phosphate = alpha-D-glucose 6-phosphate. The enzyme catalyses O-phospho-L-seryl-[protein] + alpha-D-glucose 1-phosphate = alpha-D-glucose 1,6-bisphosphate + L-seryl-[protein]. It carries out the reaction alpha-D-glucose 1,6-bisphosphate + L-seryl-[protein] = O-phospho-L-seryl-[protein] + alpha-D-glucose 6-phosphate. Its activity is regulated as follows. Inhibited by the Calvin cycle intermediates fructose-1,6-bisphosphate and ribulose-1,5-bisphosphate. Catalyzes the reversible isomerization of alpha-D-glucose 1-phosphate to alpha-D-glucose 6-phosphate. The mechanism proceeds via the intermediate compound alpha-D-glucose 1,6-bisphosphate. This enzyme participates in both the breakdown and synthesis of glucose. Promotes gravitropic responses, negative in shoots but positive in roots, by facilitating starch granules (statoliths) formation. The sequence is that of Phosphoglucomutase, chloroplastic (PGMP) from Solanum tuberosum (Potato).